We begin with the raw amino-acid sequence, 329 residues long: 4-hydroxythreonine-4-phosphate dehydrogenase (329 aa).

Substrate-binding residues include His-136 and Thr-137. The a divalent metal cation site is built by His-166, His-211, and His-266. Substrate-binding residues include Lys-274, Asn-283, and Arg-292.

The protein belongs to the PdxA family. Homodimer. It depends on Zn(2+) as a cofactor. Requires Mg(2+) as cofactor. Co(2+) is required as a cofactor.

It localises to the cytoplasm. The catalysed reaction is 4-(phosphooxy)-L-threonine + NAD(+) = 3-amino-2-oxopropyl phosphate + CO2 + NADH. It participates in cofactor biosynthesis; pyridoxine 5'-phosphate biosynthesis; pyridoxine 5'-phosphate from D-erythrose 4-phosphate: step 4/5. In terms of biological role, catalyzes the NAD(P)-dependent oxidation of 4-(phosphooxy)-L-threonine (HTP) into 2-amino-3-oxo-4-(phosphooxy)butyric acid which spontaneously decarboxylates to form 3-amino-2-oxopropyl phosphate (AHAP). This is 4-hydroxythreonine-4-phosphate dehydrogenase from Escherichia coli O6:H1 (strain CFT073 / ATCC 700928 / UPEC).